Consider the following 452-residue polypeptide: Phosphoglucosamine mutase (452 aa).

Catalysis depends on Ser108, which acts as the Phosphoserine intermediate. 4 residues coordinate Mg(2+): Ser108, Asp247, Asp249, and Asp251. Phosphoserine is present on Ser108.

It belongs to the phosphohexose mutase family. Requires Mg(2+) as cofactor. In terms of processing, activated by phosphorylation.

It catalyses the reaction alpha-D-glucosamine 1-phosphate = D-glucosamine 6-phosphate. In terms of biological role, catalyzes the conversion of glucosamine-6-phosphate to glucosamine-1-phosphate. In Burkholderia pseudomallei (strain K96243), this protein is Phosphoglucosamine mutase.